Here is an 875-residue protein sequence, read N- to C-terminus: MTLARFVLALVLGALPEVVGFDSVLNDSFHHRHRHSPPPGPQYPYYLPTHQRPPRTRPPPPLPRFPRPPRALPAQRPHALQAGHTPRPHPWGCPAGELWVSVTDFGAPCLRWAEVPPFLERSPPANWAQLRGQRHNFCRSPDGTGRPWCFYGDARGKVDWGYCDCRHGSVRLRGGKNEFEGTVEVYASGAWGTVCSSHWDDSDASVICHQLQLGGKGIAKQTPFSGLGLIPIYWSNVRCRGDEENILLCEKDIWQGGVCPQKMAAAVTCSFSRGPAFPIIRLVGGSSVHEGRVELYHAGQWGTICDDQWDDADAEVICRQLGLSGIAKAWHQAYFGEGSGPVMLDEVRCTGNELSIEQCPKSSWGEHNCGHKEDAGVSCTPLTDGVIRLAGGKGSHEGRLEVYYRGQWGTVCDDGWTELNTYVVCRQLGFKYGKQASANHFEESTGPIWLDDVSCSGKETRFLQCSRRQWGQHDCSHHEDVSIACYPGSEGHRLSLGFPVRLMDGENKKEGRVEVFINGQWGTICDDGWTDKDAAVICRQLGYKGPARARTMAYFGEGKGPIHVDNVKCTGNERSLADCIKQDIGRHNCRHSEDAGVICDYFGKKASGNSNKESLSSVCGLRLLHRRQKRIIGGKNSLRGGWPWQVSLRLKSSHGDGRLLCGATLLSSCWVLTAAHCFKRYGNSTRNYAVRVGDYHTLVPEEFEEEIGVQQIVIHREYRPDSSDYDIALVRLQGPEEQCARFSSHVLPACLPFWRERPQKTASNCYITGWGDTGRAYSRTLQQAAIPLLPKRFCEERYKGRFTGRMLCAGNLHEHKRVDSCQGDSGGPLMCERPGESWAVYGVTSWGYGCGVKDSPGVYTKVSAFVPWIKSVTKL.

A signal peptide spans M1–G20. N26 is a glycosylation site (N-linked (GlcNAc...) asparagine). The disordered stretch occupies residues H30–R87. A compositionally biased stretch (pro residues) spans T56–A71. Residues C93–C165 form the Kringle domain. Cystine bridges form between C93–C165, C109–C149, C138–C163, C195–C259, C208–C269, C239–C249, C305–C369, C318–C379, C349–C359, C412–C475, C425–C485, C455–C465, C525–C589, C538–C599, C569–C579, C619–C750, C661–C677, C765–C831, C794–C808, and C821–C850. SRCR domains are found at residues V170–F271, I280–P381, I387–P487, and V500–Y601. The tract at residues C619 to R630 is zymogen activation region. The Peptidase S1 domain maps to I631–K874. Residue H676 is the Charge relay system of the active site. A glycan (N-linked (GlcNAc...) asparagine) is linked at N683. D726 serves as the catalytic Charge relay system. Residue S825 is the Charge relay system of the active site.

It belongs to the peptidase S1 family.

Its subcellular location is the secreted. Plays a role in neuronal plasticity and the proteolytic action may subserve structural reorganizations associated with learning and memory operations. The protein is Neurotrypsin (PRSS12) of Macaca mulatta (Rhesus macaque).